The chain runs to 285 residues: Homeobox protein Hox-A13b (285 aa).

A DNA-binding region (homeobox) is located at residues 219 to 278 (GRKKRVPYTKVQLKELEREYAANKFITKDKRRRISAQTNLTERQVTIWFQNRRVKEKKVV).

Belongs to the Abd-B homeobox family.

Its subcellular location is the nucleus. Sequence-specific transcription factor which is part of a developmental regulatory system that provides cells with specific positional identities on the anterior-posterior axis. This Takifugu rubripes (Japanese pufferfish) protein is Homeobox protein Hox-A13b (hoxa13b).